Reading from the N-terminus, the 430-residue chain is Long-chain specific acyl-CoA dehydrogenase, mitochondrial (430 aa).

The transit peptide at 1-30 directs the protein to the mitochondrion; the sequence is MAARLLRGSLRFLGGHCAARPLPALRCSHS. An N6-acetyllysine modification is found at Lys-42. Ser-54 and Ser-55 each carry phosphoserine. An N6-acetyllysine; alternate mark is found at Lys-66 and Lys-81. Lys-66 and Lys-81 each carry N6-succinyllysine; alternate. Residues Lys-92 and Lys-95 each carry the N6-acetyllysine modification. Residue Lys-165 is modified to N6-succinyllysine. Residues 170–179 and 203–205 each bind FAD; these read IAMTELGAGS and FIS. Residue Ser-179 participates in substrate binding. Residue 227 to 228 participates in substrate binding; the sequence is AR. N6-succinyllysine is present on Lys-240. Lys-254 and Lys-279 each carry N6-acetyllysine; alternate. An N6-succinyllysine; alternate mark is found at Lys-254 and Lys-279. Residues Tyr-282 and 289 to 292 contribute to the substrate site; that span reads PQER. The active-site Proton acceptor is the Glu-291. Residue Arg-317 participates in FAD binding. Lys-318 is modified (N6-acetyllysine). Lys-322 is modified (N6-acetyllysine; alternate). Lys-322 carries the post-translational modification N6-succinyllysine; alternate. Gln-328 contributes to the FAD binding site. Residue Lys-358 is modified to N6-acetyllysine. Ser-362 carries the post-translational modification Phosphoserine. 385 to 389 provides a ligand contact to FAD; that stretch reads QLHGG. 412–413 provides a ligand contact to substrate; that stretch reads GG. 414–416 is an FAD binding site; it reads TNE.

It belongs to the acyl-CoA dehydrogenase family. As to quaternary structure, homotetramer. FAD is required as a cofactor. In terms of processing, acetylation at Lys-318 and Lys-322 in proximity of the cofactor-binding sites strongly reduces catalytic activity. These sites are deacetylated by SIRT3.

It localises to the mitochondrion matrix. The enzyme catalyses a long-chain 2,3-saturated fatty acyl-CoA + oxidized [electron-transfer flavoprotein] + H(+) = a long-chain (2E)-enoyl-CoA + reduced [electron-transfer flavoprotein]. The catalysed reaction is hexanoyl-CoA + oxidized [electron-transfer flavoprotein] + H(+) = (2E)-hexenoyl-CoA + reduced [electron-transfer flavoprotein]. It carries out the reaction octanoyl-CoA + oxidized [electron-transfer flavoprotein] + H(+) = (2E)-octenoyl-CoA + reduced [electron-transfer flavoprotein]. It catalyses the reaction decanoyl-CoA + oxidized [electron-transfer flavoprotein] + H(+) = (2E)-decenoyl-CoA + reduced [electron-transfer flavoprotein]. The enzyme catalyses dodecanoyl-CoA + oxidized [electron-transfer flavoprotein] + H(+) = (2E)-dodecenoyl-CoA + reduced [electron-transfer flavoprotein]. The catalysed reaction is tetradecanoyl-CoA + oxidized [electron-transfer flavoprotein] + H(+) = (2E)-tetradecenoyl-CoA + reduced [electron-transfer flavoprotein]. It carries out the reaction oxidized [electron-transfer flavoprotein] + hexadecanoyl-CoA + H(+) = (2E)-hexadecenoyl-CoA + reduced [electron-transfer flavoprotein]. It catalyses the reaction octadecanoyl-CoA + oxidized [electron-transfer flavoprotein] + H(+) = (2E)-octadecenoyl-CoA + reduced [electron-transfer flavoprotein]. The enzyme catalyses eicosanoyl-CoA + oxidized [electron-transfer flavoprotein] + H(+) = (2E)-eicosenoyl-CoA + reduced [electron-transfer flavoprotein]. The catalysed reaction is docosanoyl-CoA + oxidized [electron-transfer flavoprotein] + H(+) = (2E)-docosenoyl-CoA + reduced [electron-transfer flavoprotein]. It carries out the reaction tetracosanoyl-CoA + oxidized [electron-transfer flavoprotein] + H(+) = (2E)-tetracosenoyl-CoA + reduced [electron-transfer flavoprotein]. It catalyses the reaction (5E)-tetradecenoyl-CoA + oxidized [electron-transfer flavoprotein] + H(+) = (2E,5E)-tetradecadienoyl-CoA + reduced [electron-transfer flavoprotein]. The enzyme catalyses (5Z)-tetradecenoyl-CoA + oxidized [electron-transfer flavoprotein] + H(+) = (2E,5Z)-tetradecadienoyl-CoA + reduced [electron-transfer flavoprotein]. The catalysed reaction is oxidized [electron-transfer flavoprotein] + (9Z)-octadecenoyl-CoA + H(+) = (2E,9Z)-octadecadienoyl-CoA + reduced [electron-transfer flavoprotein]. Its pathway is lipid metabolism; mitochondrial fatty acid beta-oxidation. Functionally, long-chain specific acyl-CoA dehydrogenase is one of the acyl-CoA dehydrogenases that catalyze the first step of mitochondrial fatty acid beta-oxidation, an aerobic process breaking down fatty acids into acetyl-CoA and allowing the production of energy from fats. The first step of fatty acid beta-oxidation consists in the removal of one hydrogen from C-2 and C-3 of the straight-chain fatty acyl-CoA thioester, resulting in the formation of trans-2-enoyl-CoA. Among the different mitochondrial acyl-CoA dehydrogenases, long-chain specific acyl-CoA dehydrogenase can act on saturated and unsaturated acyl-CoAs with 6 to 24 carbons with a preference for 8 to 18 carbons long primary chains. This chain is Long-chain specific acyl-CoA dehydrogenase, mitochondrial, found in Macaca fascicularis (Crab-eating macaque).